Consider the following 419-residue polypeptide: L-rhamnose isomerase (419 aa).

His262, Asp294, and Asp296 together coordinate Mn(2+).

This sequence belongs to the rhamnose isomerase family. As to quaternary structure, homotetramer. Mn(2+) serves as cofactor.

It localises to the cytoplasm. It catalyses the reaction L-rhamnopyranose = L-rhamnulose. It participates in carbohydrate degradation; L-rhamnose degradation; glycerone phosphate from L-rhamnose: step 1/3. Functionally, catalyzes the interconversion of L-rhamnose and L-rhamnulose. The protein is L-rhamnose isomerase of Shigella sonnei (strain Ss046).